An 85-amino-acid chain; its full sequence is UPF0291 protein SP_1473 (85 aa).

The segment at 62–85 is disordered; the sequence is TPEKLRQVQREKGLHGRSLDDPNS.

This sequence belongs to the UPF0291 family.

The protein localises to the cytoplasm. The polypeptide is UPF0291 protein SP_1473 (Streptococcus pneumoniae serotype 4 (strain ATCC BAA-334 / TIGR4)).